A 218-amino-acid chain; its full sequence is Glutathione S-transferase Mu 2 (218 aa).

One can recognise a GST N-terminal domain in the interval 2 to 88 (PMTLGYWNIR…YIARKHNLCG (87 aa)). 7-8 (YW) contributes to the glutathione binding site. A phosphoserine mark is found at serine 27 and serine 44. Glutathione-binding positions include 43-46 (RSQW), lysine 50, 59-60 (NL), and 72-73 (QS). The 119-residue stretch at 90-208 (TEKEKIREDI…KSSRFLPRPV (119 aa)) folds into the GST C-terminal domain. Tyrosine 116 provides a ligand contact to substrate.

The protein belongs to the GST superfamily. Mu family. As to quaternary structure, homodimer.

The protein localises to the cytoplasm. It catalyses the reaction RX + glutathione = an S-substituted glutathione + a halide anion + H(+). The enzyme catalyses 11(S)-hydroxy-14(S),15(S)-epoxy-(5Z,8Z,12E)-eicosatrienoate + glutathione = (11S,15S)-dihydroxy-14(R)-S-glutathionyl-(5Z,8Z,12E)-eicosatrienoate. Functionally, conjugation of reduced glutathione to a wide number of exogenous and endogenous hydrophobic electrophiles. Participates in the formation of novel hepoxilin regioisomers. Has activity toward aflatoxin B(1)-8,9-epoxide (AFBO). This Macaca fascicularis (Crab-eating macaque) protein is Glutathione S-transferase Mu 2 (GSTM2).